A 493-amino-acid polypeptide reads, in one-letter code: Xaa-Pro dipeptidase (493 aa).

A2 carries the post-translational modification N-acetylalanine. S167 carries the phosphoserine modification. Residue H255 coordinates a dipeptide. Mn(2+)-binding residues include D276, D287, and H370. D287 contributes to the a dipeptide binding site. A dipeptide-binding residues include H377 and R398. Mn(2+) contacts are provided by E412 and E452.

It belongs to the peptidase M24B family. Eukaryotic-type prolidase subfamily. In terms of assembly, homodimer. Mn(2+) serves as cofactor.

It catalyses the reaction Xaa-L-Pro dipeptide + H2O = an L-alpha-amino acid + L-proline. Dipeptidase that catalyzes the hydrolysis of dipeptides with a prolyl (Xaa-Pro) or hydroxyprolyl residue in the C-terminal position. The preferred dipeptide substrate is Gly-Pro, but other Xaa-Pro dipeptides, such as Ala-Pro, Met-Pro, Phe-Pro, Val-Pro and Leu-Pro, can be cleaved. Plays an important role in collagen metabolism because the high level of iminoacids in collagen. The polypeptide is Xaa-Pro dipeptidase (PEPD) (Pongo abelii (Sumatran orangutan)).